Here is a 617-residue protein sequence, read N- to C-terminus: pH-sensitive chloride channel 2 (617 aa).

Positions 1–28 (MHSPGAAAYVFLQCLVALVAAVIAQSGA) are cleaved as a signal peptide. Over 29–387 (DQPPTTVVEV…VHLAREMGFY (359 aa)) the chain is Extracellular. N-linked (GlcNAc...) asparagine glycosylation is present at N57. Positions 82–96 (TVSVDSSSTTTVAST) are enriched in low complexity. A disordered region spans residues 82 to 110 (TVSVDSSSTTTVASTQEPTSTTERTMSPE). Residues 97-106 (QEPTSTTERT) are compositionally biased toward polar residues. N-linked (GlcNAc...) asparagine glycosylation occurs at N130. Over residues 131–147 (ATDDNRPDAKSSGKDSE) the composition is skewed to basic and acidic residues. Positions 131 to 155 (ATDDNRPDAKSSGKDSECPTLEGAD) are disordered. 4 N-linked (GlcNAc...) asparagine glycosylation sites follow: N184, N234, N351, and N370. The helical transmembrane segment at 388–408 (MMDYFIPSIMLVAISWVTFWL) threads the bilayer. Over 409–414 (QADQSA) the chain is Cytoplasmic. Residues 415–434 (PRITLGTSTMLTFITLASAQ) traverse the membrane as a helical segment. Residues 435-447 (GKTLPKVSYIKAS) are Extracellular-facing. Residues 448 to 468 (EIWFLGCTGFIFGSLVEFAFV) traverse the membrane as a helical segment. Over 469-596 (NTIWRRKRNV…VAIWIDKRSR (128 aa)) the chain is Cytoplasmic. The chain crosses the membrane as a helical span at residues 597–617 (FVFPIAFVIFNIFYWTFVYYV).

This sequence belongs to the ligand-gated ion channel (TC 1.A.9) family.

Its subcellular location is the cell membrane. It carries out the reaction chloride(in) = chloride(out). In terms of biological role, ligand and pH-gated channel that mediates chloride transport in the mid-gut and thereby may function in larval metabolism and fluid homeostasis. Channel opening is triggered by zinc binding or, to a lesser extent, an increase in extracellular pH. This is pH-sensitive chloride channel 2 from Anopheles gambiae (African malaria mosquito).